Here is a 478-residue protein sequence, read N- to C-terminus: Catalase easC (478 aa).

Residue H54 is part of the active site. Y343 lines the heme pocket. Residues 459-478 (VAEKARPDSPSRAQPGQLRL) form a disordered region.

It belongs to the catalase family. Requires heme as cofactor.

Its pathway is alkaloid biosynthesis; ergot alkaloid biosynthesis. Its function is as follows. Catalase; part of the gene cluster that mediates the biosynthesis of fungal ergot alkaloid. DmaW catalyzes the first step of ergot alkaloid biosynthesis by condensing dimethylallyl diphosphate (DMAP) and tryptophan to form 4-dimethylallyl-L-tryptophan. The second step is catalyzed by the methyltransferase easF that methylates 4-dimethylallyl-L-tryptophan in the presence of S-adenosyl-L-methionine, resulting in the formation of 4-dimethylallyl-L-abrine. The catalase easC and the FAD-dependent oxidoreductase easE then transform 4-dimethylallyl-L-abrine to chanoclavine-I which is further oxidized by easD in the presence of NAD(+), resulting in the formation of chanoclavine-I aldehyde. Chanoclavine-I aldehyde is the precursor of ergoamides and ergopeptines in Clavicipitaceae, and clavine-type alcaloids such as fumiclavine in Trichocomaceae. However, the metabolites downstream of chanoclavine-I aldehyde in Arthrodermataceae have not been identified yet. This Trichophyton verrucosum (strain HKI 0517) protein is Catalase easC.